The primary structure comprises 420 residues: UDP-N-acetylglucosamine 1-carboxyvinyltransferase (420 aa).

22-23 contacts phosphoenolpyruvate; that stretch reads KN. Arg-92 serves as a coordination point for UDP-N-acetyl-alpha-D-glucosamine. The Proton donor role is filled by Cys-116. A 2-(S-cysteinyl)pyruvic acid O-phosphothioketal modification is found at Cys-116. UDP-N-acetyl-alpha-D-glucosamine contacts are provided by residues 121 to 125, Asp-304, and Ile-326; that span reads RPVDQ.

It belongs to the EPSP synthase family. MurA subfamily.

It is found in the cytoplasm. The enzyme catalyses phosphoenolpyruvate + UDP-N-acetyl-alpha-D-glucosamine = UDP-N-acetyl-3-O-(1-carboxyvinyl)-alpha-D-glucosamine + phosphate. It participates in cell wall biogenesis; peptidoglycan biosynthesis. Its function is as follows. Cell wall formation. Adds enolpyruvyl to UDP-N-acetylglucosamine. The sequence is that of UDP-N-acetylglucosamine 1-carboxyvinyltransferase from Paraburkholderia phytofirmans (strain DSM 17436 / LMG 22146 / PsJN) (Burkholderia phytofirmans).